Consider the following 322-residue polypeptide: Myeloid-associated differentiation marker (322 aa).

A compositionally biased stretch (low complexity) spans 1-18; that stretch reads MPVTVTRTTITTTTTSSS. Residues 1–21 are disordered; the sequence is MPVTVTRTTITTTTTSSSGLG. Ser22 carries the phosphoserine modification. MARVEL domains follow at residues 31–163 and 168–319; these read ALTQ…ARPG and YMAT…HLVF. Transmembrane regions (helical) follow at residues 41-61, 70-90, 101-121, 137-157, 171-191, 203-223, 239-259, and 294-314; these read LLQL…GAWT, FTWC…LCGL, FPIT…IIYP, AIAA…EVAW, TVPG…FAFI, LEWC…AILL, FLSG…VLWP, and LAVA…LVHS.

Belongs to the MAL family. As to expression, widely expressed. Not detected in thymus.

The protein resides in the membrane. The chain is Myeloid-associated differentiation marker (MYADM) from Homo sapiens (Human).